Here is a 303-residue protein sequence, read N- to C-terminus: MQKFDTRTFQGLILTLQDYWARQGCTIVQPLDMEVGAGTSHPMTCLRALGPEPMATAYVQPSRRPTDGRYGENPNRLQHYYQFQVVIKPSPDNIQELYLGSLKELGMDPTIHDIRFVEDNWENPTLGAWGLGWEVWLNGMEVTQFTYFQQVGGLECKPVTGEITYGLERLAMYIQGVDSVYDLVWSDGPLGKTTYGDVFHQNEVEQSTYNFEYADVDFLFTCFEQYEKEAQQLLALENPLPLPAYERILKAAHSFNLLDARKAISVTERQRYILRIRTLTKAVAEAYYASREALGFPMCNKDK.

It belongs to the class-II aminoacyl-tRNA synthetase family. Tetramer of two alpha and two beta subunits.

Its subcellular location is the cytoplasm. It carries out the reaction tRNA(Gly) + glycine + ATP = glycyl-tRNA(Gly) + AMP + diphosphate. This Salmonella agona (strain SL483) protein is Glycine--tRNA ligase alpha subunit.